The primary structure comprises 253 residues: uncharacterized protein (253 aa).

The interval 211 to 235 (DEPEPAQPTLTVPSAQPVSNRRGKP) is disordered. Positions 218-229 (PTLTVPSAQPVS) are enriched in polar residues.

This is an uncharacterized protein from Mycobacterium tuberculosis (strain CDC 1551 / Oshkosh).